We begin with the raw amino-acid sequence, 572 residues long: NADP-dependent malic enzyme (572 aa).

At Met-1 the chain carries N-acetylmethionine. Catalysis depends on Tyr-102, which acts as the Proton donor. Arg-155 lines the NADP(+) pocket. The active-site Proton acceptor is Lys-173. Glu-245, Asp-246, and Asp-269 together coordinate a divalent metal cation. NADP(+) contacts are provided by residues Asp-269 and 301-318 (GAGEAALGIAHLIVMALE). Position 336 is a phosphoserine (Ser-336). Asn-408 lines the NADP(+) pocket.

Belongs to the malic enzymes family. Homotetramer. The cofactor is Mg(2+). Requires Mn(2+) as cofactor. Expressed in all tissues tested including liver, placenta and white adipose tissue.

Its subcellular location is the cytoplasm. The enzyme catalyses (S)-malate + NADP(+) = pyruvate + CO2 + NADPH. It catalyses the reaction oxaloacetate + H(+) = pyruvate + CO2. In terms of biological role, catalyzes the oxidative decarboxylation of (S)-malate in the presence of NADP(+) and divalent metal ions, and decarboxylation of oxaloacetate. This is NADP-dependent malic enzyme from Homo sapiens (Human).